Here is a 99-residue protein sequence, read N- to C-terminus: uncharacterized protein (99 aa).

A signal peptide spans 1–19; the sequence is MLGMIRWVVEGTLVAMLLS. Residues 71–99 are disordered; the sequence is DGFGRINDSGPKRRGRDQSQYSSRFVELD.

It localises to the cytoplasm. This is an uncharacterized protein from Saccharomyces cerevisiae (strain ATCC 204508 / S288c) (Baker's yeast).